Consider the following 236-residue polypeptide: Small ribosomal subunit protein uS3 (236 aa).

In terms of domain architecture, KH type-2 spans 39 to 107 (IRKFLKKELY…EISINIKEVK (69 aa)). The span at 213–229 (QPEKKEEAPARDKEGRG) shows a compositional bias: basic and acidic residues. Residues 213-236 (QPEKKEEAPARDKEGRGTRRRGRQ) form a disordered region.

This sequence belongs to the universal ribosomal protein uS3 family. As to quaternary structure, part of the 30S ribosomal subunit. Forms a tight complex with proteins S10 and S14.

In terms of biological role, binds the lower part of the 30S subunit head. Binds mRNA in the 70S ribosome, positioning it for translation. This Wolinella succinogenes (strain ATCC 29543 / DSM 1740 / CCUG 13145 / JCM 31913 / LMG 7466 / NCTC 11488 / FDC 602W) (Vibrio succinogenes) protein is Small ribosomal subunit protein uS3.